Here is a 217-residue protein sequence, read N- to C-terminus: MSTANRTFTGLLGTKLGMTQVWDENNKLIPVTVVQITPNVVTQVRTPEVDGYGAIQIAYGQIDPRKADKPSTGHFDKAGVTPRRHLTEVRTADFAEYTLGQEITVGAFEPGTKVDVVGTSKGKGFAGVMKRHNFKGVSASHGSHRNHRKPGSIGASSTPSRVFKGMRMAGRMGGERVTVLNLVVHSVDAEKGLLLVKGAVPGARGRIVFVRNAVKGK.

Residues 137–160 (VSASHGSHRNHRKPGSIGASSTPS) are disordered.

It belongs to the universal ribosomal protein uL3 family. Part of the 50S ribosomal subunit. Forms a cluster with proteins L14 and L19.

One of the primary rRNA binding proteins, it binds directly near the 3'-end of the 23S rRNA, where it nucleates assembly of the 50S subunit. This chain is Large ribosomal subunit protein uL3, found in Clavibacter sepedonicus (Clavibacter michiganensis subsp. sepedonicus).